A 459-amino-acid chain; its full sequence is Nuclear distribution protein PAC1-2 (459 aa).

A coiled-coil region spans residues 56-83 (TSIVRLQKKIMDLESRNAALQTELANLT). WD repeat units follow at residues 108–149 (SHRD…RTVK), 151–191 (HTRA…KNIR), 195–244 (GHDH…KTLR), 246–284 (HTAW…SDHK), 306–348 (QYLA…LGTL), 350–389 (GHDN…KCVK), 394–438 (AHER…DTPD), and 440–459 (QVRC…VFAD).

The protein belongs to the WD repeat LIS1/nudF family. In terms of assembly, self-associates. Interacts with NDL1 and dynein.

It localises to the cytoplasm. It is found in the cytoskeleton. Its subcellular location is the spindle pole. Positively regulates the activity of the minus-end directed microtubule motor protein dynein. May enhance dynein-mediated microtubule sliding by targeting dynein to the microtubule plus end. Required for nuclear migration during vegetative growth as well as development. Required for retrograde early endosome (EE) transport from the hyphal tip. Required for localization of dynein to the mitotic spindle poles. Recruits additional proteins to the dynein complex at SPBs. The sequence is that of Nuclear distribution protein PAC1-2 from Uncinocarpus reesii (strain UAMH 1704).